Here is a 477-residue protein sequence, read N- to C-terminus: Dihydrolipoyl dehydrogenase 3 (477 aa).

Residues 39-47 (EKGEYGGAC), K56, and A118 each bind FAD. A disulfide bond links C47 and C52. NAD(+)-binding positions include 186–190 (GAGYI), E209, and 279–282 (AVGR). FAD contacts are provided by D322 and A330. The Proton acceptor role is filled by H454.

This sequence belongs to the class-I pyridine nucleotide-disulfide oxidoreductase family. In terms of assembly, homodimer. FAD serves as cofactor.

It is found in the cytoplasm. The enzyme catalyses N(6)-[(R)-dihydrolipoyl]-L-lysyl-[protein] + NAD(+) = N(6)-[(R)-lipoyl]-L-lysyl-[protein] + NADH + H(+). In Haloarcula marismortui (strain ATCC 43049 / DSM 3752 / JCM 8966 / VKM B-1809) (Halobacterium marismortui), this protein is Dihydrolipoyl dehydrogenase 3 (lpdA3).